The sequence spans 103 residues: Small ribosomal subunit protein uS10 (103 aa).

Belongs to the universal ribosomal protein uS10 family. As to quaternary structure, part of the 30S ribosomal subunit.

Involved in the binding of tRNA to the ribosomes. In Laribacter hongkongensis (strain HLHK9), this protein is Small ribosomal subunit protein uS10.